The chain runs to 780 residues: Mediator of RNA polymerase II transcription subunit 15 (780 aa).

The segment at 1–124 is interaction with nhr-49; sequence MSEEDWPSPK…PQPTSAQARN (124 aa). The tract at residues 2-96 is interaction with sbp-1; it reads SEEDWPSPKF…SPPCTTAALL (95 aa). Disordered stretches follow at residues 91-152, 166-363, and 564-597; these read TTAA…APSA, PSPD…QGMM, and GPGP…GTPN. Over residues 125-139 the composition is skewed to low complexity; that stretch reads PPVTVATTQASTTPS. Residues 225–245 are compositionally biased toward gly residues; it reads PPNGYGGYGMMNGPPGSGAPM. Residues 296 to 316 show a composition bias toward polar residues; that stretch reads QGATPTGPSSVLESLINQPQQ. Low complexity-rich tracts occupy residues 333 to 353 and 574 to 594; these read AAQR…QQQR and SMSG…NPMG.

It belongs to the Mediator complex subunit 15 family. In terms of assembly, component of the Mediator complex. Interacts with nhr-49, nhr-64 and sbp-1. In terms of tissue distribution, expressed in the intestine and head neurons.

The protein resides in the nucleus. Component of the Mediator complex, a coactivator involved in regulated gene transcription of nearly all RNA polymerase II-dependent genes. Mediator functions as a bridge to convey information from gene-specific regulatory proteins to the basal RNA polymerase II transcription machinery. Mediator is recruited to promoters by direct interactions with regulatory proteins and serves as a scaffold for the assembly of a functional preinitiation complex with RNA polymerase II and the general transcription factors. Required for regulated expression of genes controlling fatty acid desaturation by transcription factors including sbp-1 and nhr-49. Involved in the response to simulated microgravity, in concert with sbp-1, probably acting in the intestine. The chain is Mediator of RNA polymerase II transcription subunit 15 (mdt-15) from Caenorhabditis elegans.